A 311-amino-acid chain; its full sequence is Homeobox-leucine zipper protein HOX13 (311 aa).

The segment at 1-74 (MKRPTSSSRK…PSCGLGEKKR (74 aa)) is disordered. Acidic residues predominate over residues 35–54 (DEAEMEEVDEEEEEEVDEDM). Positions 69–128 (LGEKKRRLALEQVRALERSFDTDNKLDPDRKARIARDLGLQPRQVAVWFQNRRARWKTKQ) form a DNA-binding region, homeobox. The tract at residues 127–171 (KQLERDFAALRARHDALRADCDALRRDKDALAAEIRELREKLPTK) is leucine-zipper.

This sequence belongs to the HD-ZIP homeobox family. Class I subfamily. In terms of tissue distribution, expressed in seedlings, roots, stems, leaf sheaths and blades and panicles.

The protein resides in the nucleus. Functionally, probable transcription factor. The sequence is that of Homeobox-leucine zipper protein HOX13 (HOX13) from Oryza sativa subsp. japonica (Rice).